A 1789-amino-acid chain; its full sequence is Protein sprint (1789 aa).

Disordered stretches follow at residues 53 to 120 (TTAN…AHPP), 140 to 190 (TTTA…DLAN), 218 to 237 (PLWN…HPTG), 261 to 317 (QRMH…QAGL), 329 to 378 (LNNN…DADD), and 401 to 460 (RRSR…PCDL). A compositionally biased stretch (low complexity) spans 82–114 (SINNNKNNNISNKNNNNNNNNNNNINNNNNNNN). Residues 140–149 (TTTANQLQQQ) show a composition bias toward polar residues. The segment covering 176 to 185 (PSEEDGDTDA) has biased composition (acidic residues). Residues 223–233 (RNGNGSTTTHC) show a composition bias toward polar residues. Residues 295-317 (NNNNINNNHNGQQSQKSQQQAGL) are compositionally biased toward low complexity. Residues 337 to 361 (QPGSMTPASNRTGLDSNQNQKQNLN) are compositionally biased toward polar residues. The span at 409 to 418 (QSRTSLVSSS) shows a compositional bias: low complexity. Residues 428–445 (TSSEDDEEEPVEAEDEGE) are compositionally biased toward acidic residues. An SH2 domain is found at 473–566 (WFLPGIQRSG…ELPVQLMLPR (94 aa)). Disordered regions lie at residues 632-689 (FFSD…SGGQ), 744-787 (TAPE…SANG), 852-918 (GECK…ILES), 969-1006 (DLLA…QSLL), 1040-1067 (AAED…QGSP), 1094-1123 (RSQM…MLQP), and 1138-1160 (PKPK…KRAR). The segment covering 639 to 649 (KPPPTGAPPLP) has biased composition (pro residues). Residues 671–686 (TPSDTTNSSLSSFTTS) are compositionally biased toward low complexity. Polar residues predominate over residues 857 to 868 (TLSSQGSSSNDS). The segment covering 903–914 (AGKESQHYKESD) has biased composition (basic and acidic residues). Residues 974–984 (TPSTPTPTQQS) show a composition bias toward low complexity. Polar residues-rich tracts occupy residues 994-1006 (TATP…QSLL) and 1048-1065 (TTPT…SKQG). The segment covering 1143 to 1154 (SQQQQQSQQQQQ) has biased composition (low complexity). The VPS9 domain occupies 1531 to 1673 (RSEDIQLLAQ…LKTFMASEGE (143 aa)). A Ras-associating domain is found at 1689-1777 (CSSVLRVIIP…CMLAYKRIDA (89 aa)).

The protein belongs to the RIN (Ras interaction/interference) family. As to expression, in late cellular blastoderm embryos, it is expressed in the posterior end. Then, as development proceeds, it is expressed in the developing midgut, amnioserosa and in a specific subset of CNS neurons. Isoform 1 is expressed earlier in developing midgut and amnioserosa, but is not expressed in the CNS.

Potential Ras effector protein. May function as a guanine nucleotide exchange (GEF), by exchanging bound GDP for free GTP. The chain is Protein sprint (spri) from Drosophila melanogaster (Fruit fly).